Reading from the N-terminus, the 791-residue chain is MRGIRSLPCWAPGLSTKRIPPRELFADLFPNACVISARHSARNGLIRQFSGCSGSISNSCNPRPYRSAITSLLSANVCSKGVSAVQPRFLSTVRLFSTSQRSLEPKSNVKSTGGQVVRPELHQDQEHEDIEKGFELSERAAQAAQVNLSAKLAKDGAAGKKAGFKEIWRLLLIARPEAKKLALAFLFLLVSSGITMSIPFSIGKIMDTSTKATTEGGNELFGLSLPMFYGALAGILTLGAAANYGRIIILRIVGERIVARLRSKLFRQTFVQDAEFFDANRVGDLISRLSSDTIIVGKSITQNLSDGLRAAVSGAAGFGLMAYVSLKLSSILALLLPPIGLGAFFYGRAIRNLSRQIQRNLGTLTKIAEERLGNVKTSQSFAGEVLEVRRYNNQVRKIFELGKKESLISATFFSSTGFAGNMTILALLYVGGGMVQSGAITIGELTSFLMYTAYAGSSMFGLSSFYSELMKGVGAASRLFELQDRQPTISPTKGEKVASARGPIRFENVTFSYPTRPAVPIFRDLNFEIPQGTNVAIVGPSGGGKSTIASILLRFYSPTEGRVLIGGKDITHMNAKSLRRKIGIVSQEPVLFSGTIAENIAYGKPQAKRSEIVAAARKANCQFISDFPDGLDTQVGPRGAQLSGGQKQRIAIARALIKDPDILILDEATSALDAESETLVNSALTALLRGNNTTISIAHRLSTIKRSDTIIVLGPDGRVAEQGSYEELSARPDGAFTKLMEWQMSGGEVMDQLANTPANPVAQETSWDLQSDDGTEISEDTNIPSEPRTID.

Asn147 is a glycosylation site (N-linked (GlcNAc...) asparagine). Transmembrane regions (helical) follow at residues 182-202 (ALAFLFLLVSSGITMSIPFSI) and 220-240 (LFGLSLPMFYGALAGILTLGA). One can recognise an ABC transmembrane type-1 domain in the interval 182–471 (ALAFLFLLVS…LSSFYSELMK (290 aa)). Residue Asn303 is glycosylated (N-linked (GlcNAc...) asparagine). 2 helical membrane passes run 307–324 (GLRAAVSGAAGFGLMAYV) and 326–346 (LKLSSILALLLPPIGLGAFFY). Residues Asn352 and Asn421 are each glycosylated (N-linked (GlcNAc...) asparagine). 2 helical membrane-spanning segments follow: residues 422 to 442 (MTILALLYVGGGMVQSGAITI) and 445 to 465 (LTSFLMYTAYAGSSMFGLSSF). The region spanning 504–741 (IRFENVTFSY…PDGAFTKLME (238 aa)) is the ABC transporter domain. N-linked (GlcNAc...) asparagine glycosylation occurs at Asn508. 539–546 (GPSGGGKS) is a binding site for ATP. An N-linked (GlcNAc...) asparagine glycan is attached at Asn692. Over residues 754-769 (ANTPANPVAQETSWDL) the composition is skewed to polar residues. Residues 754 to 791 (ANTPANPVAQETSWDLQSDDGTEISEDTNIPSEPRTID) are disordered. Positions 770 to 779 (QSDDGTEISE) are enriched in acidic residues.

The protein belongs to the ABC transporter superfamily. ABCB family. Mitochondrial peptide exporter (TC 3.A.1.212) subfamily.

It localises to the cell membrane. In terms of biological role, pleiotropic ABC efflux transporter that may be involved in A.fumigatus adaptation to azoles. The protein is ABC multidrug transporter mdr2 of Aspergillus fumigatus (strain ATCC MYA-4609 / CBS 101355 / FGSC A1100 / Af293) (Neosartorya fumigata).